The sequence spans 1433 residues: MARNNDKNTVQRFNQISIGLASPESILAESRGEVLKPETINYRTHKPERDGLFCERIFGPVKDYECACGKYKRIRYKGIVCDRCGVEVTEKKVRRDRVGHINLVVPVAHIWYFRSLPNKIGYLLGLPSKKLDMIIYYERYVVIQAGNAKNEEGEPLKKMDFLTEEEYLNILDELPQENQYLDDSDPNKFIAKMGAECLIEILKRIDLDELSYELRHKANNETSKQRKTEALKRLQVVEALRDANKNRENNPEWMIMKVVPVIPPELRPLVPLDGGRFATSDLNDLYRRVIIRNNRLKRLMEIKAPEVILRNEKRMLQESVDSLFDNTRKSSAVKTDSNRPLKSLSDSLKGKQGRFRQNLLGKRVDYSARSVIVVGPELKMFECGLPKNMAAELYKPFIIRKLIERGIVKTVKSAKKIIDKKEPVVWDILENVLKGHPVLLNRAPTLHRLGIQAFQPKLIEGKAIQLHPLACTAFNADFDGDQMAVHLPLGPEAILEAQLLMLASHNILNPANGSPITVPSQDMVLGLYYMTKHKKTTKDETVIGEGLTFYSAEELVIAYNQKRVDLNAGIKIRTKDYNEEGELVYMIKDTTVGRVLFNEAVPEKAGYINEVLTKKSLREIIGKILKITSVPETSEFLDEIKGLGYGFAFRGGLSFSLGDIIIPEEKQSMIDEANEQVEGIIGNYNMGLITNNERYNQVIDIWTSTNAGLTDLAMKRIREDKQGFNSVYMMLDSGARGSKEQIRQLTGMRGLMAKPKKSNSGGGEIIENPILSNFKEGLSILEYFISTHGARKGLADTALKTADAGYLTRRLVDVSQDVIVNEDDCGTLRGVEVKPLKKNEEIVESLGERILGRISLNDVVNPSTQEHIVATNEEITEEIVAKIEAAPIESVEVRSPLTCEAKKGICIKCYGRNLATNKIVQTGEAVGVVAAQSIGEPGTQLTLRTFHVGGIAGNISEDNKLEAKFAGVAEIEDLKVVKGEAPDGGTADIVISRTAELKIKDKKTGVVLSNNNIPYGSQININDGATVKEGEVICTWDPYNGVIISEFAGKIKYENVEQGVTYQVEIDEQTGFQEKVISESRNKKLIPTLHILGKKDEVIRSYNLPVGAHLMVDNEEKIGVGKILVKIPRKSSKAGDITGGLPRVTELFEARNPSNPAVVSEIDGVVSFGKIKRGNREIIVESKLGEVKKYLVKLSNQILVQENDYVRAGMPLSDGSITPEDILNIKGPNAVQQYLVNEVQEVYRLQGVKINDKHFEVVVRQMMRKVRIVDPGDTIFLENQLVHKADFIEENNKLFGMKVIEDAGDSEKLKAGQIITPRDLRDENSILRREDKNLATARDVITATANPVLQGITRASLQTKSFISAASFQETTKVLNEAAVSGKIDYLEGLKENVIVGHRIPAGTGMRKYDSIIVGSKEEFDQMLEKKQEVNYN.

Cysteine 66, cysteine 68, cysteine 81, and cysteine 84 together coordinate Zn(2+). The segment at 328-347 is disordered; the sequence is RKSSAVKTDSNRPLKSLSDS. The segment covering 329 to 346 has biased composition (polar residues); the sequence is KSSAVKTDSNRPLKSLSD. Aspartate 477, aspartate 479, and aspartate 481 together coordinate Mg(2+). Zn(2+)-binding residues include cysteine 825, cysteine 899, cysteine 906, and cysteine 909.

It belongs to the RNA polymerase beta' chain family. As to quaternary structure, the RNAP catalytic core consists of 2 alpha, 1 beta, 1 beta' and 1 omega subunit. When a sigma factor is associated with the core the holoenzyme is formed, which can initiate transcription. Requires Mg(2+) as cofactor. It depends on Zn(2+) as a cofactor.

It catalyses the reaction RNA(n) + a ribonucleoside 5'-triphosphate = RNA(n+1) + diphosphate. Its function is as follows. DNA-dependent RNA polymerase catalyzes the transcription of DNA into RNA using the four ribonucleoside triphosphates as substrates. This Christiangramia forsetii (strain DSM 17595 / CGMCC 1.15422 / KT0803) (Gramella forsetii) protein is DNA-directed RNA polymerase subunit beta'.